A 446-amino-acid polypeptide reads, in one-letter code: Golgi reassembly-stacking protein 1 (446 aa).

The segment at 1–20 (MGLGASSEQPAGGEGFHLHG) is disordered. Gly-2 carries the N-myristoyl glycine lipid modification. PDZ GRASP-type domains lie at 14 to 104 (EGFH…FCSF) and 110 to 198 (HVWH…YGYL). Residues 14–214 (EGFHLHGVQE…PSSQHKKPPG (201 aa)) are GRASP. Residues His-17, His-19, and Cys-102 each contribute to the Zn(2+) site. Residues 189–201 (LGCGIGYGYLHRI) are essential for interaction with GOLGA2/GM130. Disordered stretches follow at residues 202–252 (PTQP…LGSR) and 343–446 (VSGP…EPGL). 3 positions are modified to phosphothreonine: Thr-216, Thr-220, and Thr-224. Residues 343-354 (VSGPEDIGSSSS) are compositionally biased toward low complexity. Ser-365, Ser-367, and Ser-376 each carry phosphoserine.

Belongs to the GORASP family. Homodimer. Forms higher-order oligomers under interphase but not mitotic conditions. Dimers of the protein on one membrane might be able to interact with dimers on another and so stack cisternae. Interacts with the C-terminus of GOLGA2/GM130 under both mitotic and non-mitotic conditions. The interaction is critical for the correct targeting of both proteins to the cis-Golgi. Interacts with TMED2 and TMED3. Phosphorylated by CDC2/B1 and PLK kinases during mitosis. Phosphorylation cycle correlates with the cisternal stacking cycle. Phosphorylation of the homodimer prevents the association of dimers into higher-order oligomers, leading to cisternal unstacking. Post-translationally, target for caspase-3 cleavage during apoptosis. The cleavage contributes to Golgi fragmentation and occurs very early in the execution phase of apoptosis. In terms of processing, myristoylated.

It localises to the golgi apparatus. The protein resides in the cis-Golgi network membrane. In terms of biological role, key structural protein of the Golgi apparatus. The membrane cisternae of the Golgi apparatus adhere to each other to form stacks, which are aligned side by side to form the Golgi ribbon. Acting in concert with GORASP2/GRASP55, is required for the formation and maintenance of the Golgi ribbon, and may be dispensable for the formation of stacks. However, other studies suggest that GORASP1 plays an important role in assembly and membrane stacking of the cisternae, and in the reassembly of Golgi stacks after breakdown during mitosis. Caspase-mediated cleavage of GORASP1 is required for fragmentation of the Golgi during apoptosis. Also mediates, via its interaction with GOLGA2/GM130, the docking of transport vesicles with the Golgi membranes. Mediates ER stress-induced unconventional (ER/Golgi-independent) trafficking of core-glycosylated CFTR to cell membrane. This chain is Golgi reassembly-stacking protein 1 (Gorasp1), found in Mus musculus (Mouse).